We begin with the raw amino-acid sequence, 847 residues long: Alanine--tRNA ligase (847 aa).

Zn(2+) contacts are provided by His554, His558, Cys656, and His660.

It belongs to the class-II aminoacyl-tRNA synthetase family. Requires Zn(2+) as cofactor.

Its subcellular location is the cytoplasm. The catalysed reaction is tRNA(Ala) + L-alanine + ATP = L-alanyl-tRNA(Ala) + AMP + diphosphate. Catalyzes the attachment of alanine to tRNA(Ala) in a two-step reaction: alanine is first activated by ATP to form Ala-AMP and then transferred to the acceptor end of tRNA(Ala). Also edits incorrectly charged Ser-tRNA(Ala) and Gly-tRNA(Ala) via its editing domain. The chain is Alanine--tRNA ligase from Helicobacter pylori (strain Shi470).